Here is a 321-residue protein sequence, read N- to C-terminus: Transaldolase (321 aa).

Lysine 132 serves as the catalytic Schiff-base intermediate with substrate.

It belongs to the transaldolase family. Type 1 subfamily. As to quaternary structure, homodimer.

The protein localises to the cytoplasm. The catalysed reaction is D-sedoheptulose 7-phosphate + D-glyceraldehyde 3-phosphate = D-erythrose 4-phosphate + beta-D-fructose 6-phosphate. The protein operates within carbohydrate degradation; pentose phosphate pathway; D-glyceraldehyde 3-phosphate and beta-D-fructose 6-phosphate from D-ribose 5-phosphate and D-xylulose 5-phosphate (non-oxidative stage): step 2/3. Functionally, transaldolase is important for the balance of metabolites in the pentose-phosphate pathway. The sequence is that of Transaldolase from Agrobacterium fabrum (strain C58 / ATCC 33970) (Agrobacterium tumefaciens (strain C58)).